Consider the following 185-residue polypeptide: Peptidyl-tRNA hydrolase (185 aa).

Tyr14 contributes to the tRNA binding site. The Proton acceptor role is filled by His19. Positions 65, 67, and 113 each coordinate tRNA.

The protein belongs to the PTH family. As to quaternary structure, monomer.

It localises to the cytoplasm. It catalyses the reaction an N-acyl-L-alpha-aminoacyl-tRNA + H2O = an N-acyl-L-amino acid + a tRNA + H(+). Functionally, hydrolyzes ribosome-free peptidyl-tRNAs (with 1 or more amino acids incorporated), which drop off the ribosome during protein synthesis, or as a result of ribosome stalling. In terms of biological role, catalyzes the release of premature peptidyl moieties from peptidyl-tRNA molecules trapped in stalled 50S ribosomal subunits, and thus maintains levels of free tRNAs and 50S ribosomes. In Rickettsia canadensis (strain McKiel), this protein is Peptidyl-tRNA hydrolase.